Here is a 189-residue protein sequence, read N- to C-terminus: Transcriptional repressor NrdR (189 aa).

A zinc finger spans residues 3 to 34; that stretch reads CPFCRGDDSRVVDSREVEDGQAIRRRRSCSGC. Residues 46 to 136 form the ATP-cone domain; it reads LSVVKRSGVT…VYRAFSSVED (91 aa). The tract at residues 152–189 is disordered; sequence RLPEGPEAAQGGPESKAGNGQAAGSGDPEGVKAEKSSE. Residues 180–189 show a composition bias toward basic and acidic residues; it reads EGVKAEKSSE.

It belongs to the NrdR family. Zn(2+) is required as a cofactor.

In terms of biological role, negatively regulates transcription of bacterial ribonucleotide reductase nrd genes and operons by binding to NrdR-boxes. In Saccharopolyspora erythraea (strain ATCC 11635 / DSM 40517 / JCM 4748 / NBRC 13426 / NCIMB 8594 / NRRL 2338), this protein is Transcriptional repressor NrdR.